We begin with the raw amino-acid sequence, 130 residues long: Small ribosomal subunit protein uS9 (130 aa).

The disordered stretch occupies residues 109-130 (RVKERKKPGLKKARKARQFSKR). Residues 111 to 130 (KERKKPGLKKARKARQFSKR) show a composition bias toward basic residues.

This sequence belongs to the universal ribosomal protein uS9 family.

In Mycoplasma mobile (strain ATCC 43663 / 163K / NCTC 11711) (Mesomycoplasma mobile), this protein is Small ribosomal subunit protein uS9.